Here is a 194-residue protein sequence, read N- to C-terminus: tRNA(Phe) 7-((3-amino-3-carboxypropyl)-4-demethylwyosine(37)-N(4))-methyltransferase 1 (194 aa).

This sequence belongs to the TYW3 family.

The catalysed reaction is 4-demethyl-7-[(3S)-3-amino-3-carboxypropyl]wyosine(37) in tRNA(Phe) + S-adenosyl-L-methionine = 7-[(3S)-3-amino-3-carboxypropyl]wyosine(37) in tRNA(Phe) + S-adenosyl-L-homocysteine + H(+). Its function is as follows. S-adenosyl-L-methionine-dependent methyltransferase that acts as a component of the wyosine derivatives biosynthesis pathway. Probably methylates N-4 position of wybutosine-86 to produce wybutosine-72. The chain is tRNA(Phe) 7-((3-amino-3-carboxypropyl)-4-demethylwyosine(37)-N(4))-methyltransferase 1 from Pyrococcus abyssi (strain GE5 / Orsay).